A 408-amino-acid chain; its full sequence is MDAFKRNLEKLAELAIRVGLNLEKGQEVIATAPIEAVDFVRLLAEKAYREGASLFTVIYGDQELARKRLALAPEEGLDKAPAWLYEGMARAFREGAARLAVSGSDPKALEGLPPEKVGRAQKANARAYKPALEAITEFVTNWTIVPFAHPGWARAVFPGLPEEEAVRRLWEAIFQATRADQEDPIAAWEAHNRALHEKVAYLNARRFHALHFKGPGTDLVVGLAEGHLWQGGATATKGGRLCNPNLPTEEVFTAPHRERVEGVVRASRPLALGGTLVEGIFARFERGFAVEVRAEKGEEVLRRLLDTDEGARRLGEVALVPADNPIAKTGLVFFDTLFDENAASHIAFGQAYQENLEGRPSGEAFRKRGGNESLVHVDWMIGSEEMDVDGLYEDGTRTPLMRRGRWVV.

A divalent metal cation contacts are provided by E250, E316, E340, H345, H376, and D378.

Belongs to the peptidase M29 family. As to quaternary structure, homodimer. Co(2+) is required as a cofactor. The cofactor is Zn(2+). It depends on Mg(2+) as a cofactor.

Its function is as follows. Metal-dependent exopeptidase. The protein is Aminopeptidase T of Thermus thermophilus (strain ATCC 27634 / DSM 579 / HB8).